Reading from the N-terminus, the 90-residue chain is Small ribosomal subunit protein bS20 (90 aa).

Over residues 1–11 (MANIKSSEKDI) the composition is skewed to basic and acidic residues. The tract at residues 1–29 (MANIKSSEKDIRRTKRRNAANSQNRSRLR) is disordered.

This sequence belongs to the bacterial ribosomal protein bS20 family.

Functionally, binds directly to 16S ribosomal RNA. This is Small ribosomal subunit protein bS20 from Leptospira borgpetersenii serovar Hardjo-bovis (strain JB197).